Here is a 2376-residue protein sequence, read N- to C-terminus: Cell morphogenesis protein PAG1 (2376 aa).

The tract at residues 1–30 (MASRFTFPPQRDQGIGFTFPPTNKAEGSSN) is disordered. S141 is subject to Phosphoserine. The tract at residues 275 to 294 (SSSNTTSKYKHNNNTNNLPG) is disordered. Phosphoserine is present on S1144. At T2264 the chain carries Phosphothreonine. Phosphoserine occurs at positions 2267 and 2355.

This sequence to S.pombe mor2. In terms of assembly, associates with CBK1.

Seems to play a role in cell morphogenesis. This chain is Cell morphogenesis protein PAG1 (TAO3), found in Saccharomyces cerevisiae (strain ATCC 204508 / S288c) (Baker's yeast).